Reading from the N-terminus, the 826-residue chain is Periplasmic nitrate reductase (826 aa).

Residues 1–32 constitute a signal peptide (tat-type signal); it reads MELNRRDFMKANAAIAAAAAAGITIPVKNVQA. Residues 37 to 93 enclose the 4Fe-4S Mo/W bis-MGD-type domain; the sequence is IRWDKAPCRYCGTGCSVLVGTKDGRVVATQGDPDAEVNRGLNCIKGYFLSKIMYGAD. Residues Cys-44, Cys-47, Cys-51, and Cys-79 each contribute to the [4Fe-4S] cluster site. Mo-bis(molybdopterin guanine dinucleotide) is bound by residues Lys-81, Gln-148, Asn-173, Cys-177, 210–217, 241–245, 260–262, Met-370, Gln-374, Asn-480, 506–507, Lys-529, Asp-556, and 716–725; these read WGSNMAEM, STYEH, QSD, SD, and TGRVLEHWHT. Phe-792 lines the substrate pocket. Mo-bis(molybdopterin guanine dinucleotide)-binding residues include Asn-800 and Lys-817.

Belongs to the prokaryotic molybdopterin-containing oxidoreductase family. NasA/NapA/NarB subfamily. Component of the periplasmic nitrate reductase NapAB complex composed of NapA and NapB. The cofactor is [4Fe-4S] cluster. Mo-bis(molybdopterin guanine dinucleotide) serves as cofactor. In terms of processing, predicted to be exported by the Tat system. The position of the signal peptide cleavage has not been experimentally proven.

The protein resides in the periplasm. The catalysed reaction is 2 Fe(II)-[cytochrome] + nitrate + 2 H(+) = 2 Fe(III)-[cytochrome] + nitrite + H2O. Functionally, catalytic subunit of the periplasmic nitrate reductase complex NapAB. Receives electrons from NapB and catalyzes the reduction of nitrate to nitrite. The polypeptide is Periplasmic nitrate reductase (Actinobacillus succinogenes (strain ATCC 55618 / DSM 22257 / CCUG 43843 / 130Z)).